The primary structure comprises 502 residues: MSEQYILAIDEGTTSTREIIFNYAGQQVASVAREFTQYFPKPGWVEHQAEEIWNAVQITTSTALINSAIRPDQLAVIGITNQRETTVVWDKETGRPIYPAIVWQSRQTSDIAEKLVKDSYSEMIRQKTGLVIAPYFSATKIRWILDHLEGAQERAEKGELLFGTIDTWLVWKLTRGKVHVTDCTNASRTMLFNIHDLTWDQEILDLLKIPRTMLPEVKSNSEVYGETDPYQFFGGRVPIAGMAGDQQAALFGQLAVKPGMVKNTYETGSFIVMNTGEEPIESKNNLLTTIGYKLGDQVNYALEGSVFVAGSAIQWLRDSVKLLNSAPESEQAALESKDANEVYVVPAFTGLGAPYWDSEARGAIFGLTRGSSDKDLIKATLQSLAYQTRDVVDTMQKDSGIEIPVLRVDGGASNNNYLLQFQADLLGKKIERAADLETTGLGAAFLAGLAVGYWQDLDSLKEIAKTGAAFAPKMEEAERDRLYAGWQRAVLATRVFAHGKDF.

Residue T13 coordinates ADP. T13, T14, and S15 together coordinate ATP. T13 provides a ligand contact to sn-glycerol 3-phosphate. Residue R17 participates in ADP binding. 4 residues coordinate sn-glycerol 3-phosphate: R83, E84, Y135, and D245. Positions 83, 84, 135, 245, and 246 each coordinate glycerol. The ADP site is built by T267 and G310. ATP is bound by residues T267, G310, Q314, and G411. Positions 411 and 415 each coordinate ADP.

Belongs to the FGGY kinase family. Homotetramer and homodimer (in equilibrium).

It carries out the reaction glycerol + ATP = sn-glycerol 3-phosphate + ADP + H(+). The protein operates within polyol metabolism; glycerol degradation via glycerol kinase pathway; sn-glycerol 3-phosphate from glycerol: step 1/1. Its activity is regulated as follows. Activated by phosphorylation and inhibited by fructose 1,6-bisphosphate (FBP). In terms of biological role, key enzyme in the regulation of glycerol uptake and metabolism. Catalyzes the phosphorylation of glycerol to yield sn-glycerol 3-phosphate. The protein is Glycerol kinase of Lactobacillus delbrueckii subsp. bulgaricus (strain ATCC BAA-365 / Lb-18).